The chain runs to 210 residues: Small ribosomal subunit protein uS3 (210 aa).

Positions 17–86 (IDEFLEKELR…NPQIDVQEIK (70 aa)) constitute a KH type-2 domain.

It belongs to the universal ribosomal protein uS3 family. In terms of assembly, part of the 30S ribosomal subunit.

In terms of biological role, binds the lower part of the 30S subunit head. The protein is Small ribosomal subunit protein uS3 of Pyrococcus abyssi (strain GE5 / Orsay).